The chain runs to 98 residues: NADH-ubiquinone oxidoreductase chain 4L (98 aa).

A run of 3 helical transmembrane segments spans residues 2–22, 29–49, and 61–81; these read SLVY…LLMF, SLLC…ILIL, and IIML…LVMV.

This sequence belongs to the complex I subunit 4L family. Core subunit of respiratory chain NADH dehydrogenase (Complex I) which is composed of 45 different subunits.

The protein localises to the mitochondrion inner membrane. It carries out the reaction a ubiquinone + NADH + 5 H(+)(in) = a ubiquinol + NAD(+) + 4 H(+)(out). Functionally, core subunit of the mitochondrial membrane respiratory chain NADH dehydrogenase (Complex I) which catalyzes electron transfer from NADH through the respiratory chain, using ubiquinone as an electron acceptor. Part of the enzyme membrane arm which is embedded in the lipid bilayer and involved in proton translocation. The protein is NADH-ubiquinone oxidoreductase chain 4L (MT-ND4L) of Galemys pyrenaicus (Iberian desman).